The following is a 466-amino-acid chain: 3-isopropylmalate dehydratase large subunit (466 aa).

3 residues coordinate [4Fe-4S] cluster: C347, C408, and C411.

Belongs to the aconitase/IPM isomerase family. LeuC type 1 subfamily. In terms of assembly, heterodimer of LeuC and LeuD. It depends on [4Fe-4S] cluster as a cofactor.

The catalysed reaction is (2R,3S)-3-isopropylmalate = (2S)-2-isopropylmalate. The protein operates within amino-acid biosynthesis; L-leucine biosynthesis; L-leucine from 3-methyl-2-oxobutanoate: step 2/4. Its function is as follows. Catalyzes the isomerization between 2-isopropylmalate and 3-isopropylmalate, via the formation of 2-isopropylmaleate. This Herminiimonas arsenicoxydans protein is 3-isopropylmalate dehydratase large subunit.